Here is a 970-residue protein sequence, read N- to C-terminus: Cullin-4B (970 aa).

Positions 1–14 (MSRSTRSKERREND) are enriched in basic and acidic residues. Disordered stretches follow at residues 1–157 (MSRS…SFCL) and 189–211 (AEES…QQQQ). T15 carries the post-translational modification Phosphothreonine. S17 bears the Phosphoserine mark. Pro residues predominate over residues 36–57 (PPRPPYPPLLPPVFPPPTPPPQ). The segment covering 78-98 (SGFSSPNPSAASAAAQEVRSA) has biased composition (low complexity). Polar residues predominate over residues 99-109 (TDGNTSTTPPT). T106 is subject to Phosphothreonine. Residue S110 is modified to Phosphoserine. The Nuclear localization signal signature appears at 112–115 (KKRK). A compositionally biased stretch (low complexity) spans 117–126 (NSSSSSSNSS). Positions 146–155 (DSASPSTSSF) are enriched in polar residues. A phosphoserine mark is found at S154 and S200. A compositionally biased stretch (low complexity) spans 192–211 (SSSSSSSSSPTAATSQQQQQ). T202 carries the phosphothreonine modification. K247 participates in a covalent cross-link: Glycyl lysine isopeptide (Lys-Gly) (interchain with G-Cter in ubiquitin). S250 carries the phosphoserine modification. One can recognise a Cullin neddylation domain in the interval 902-962 (DRQYQIDAAI…RDYMERDKEN (61 aa)). K916 participates in a covalent cross-link: Glycyl lysine isopeptide (Lys-Gly) (interchain with G-Cter in NEDD8).

This sequence belongs to the cullin family. In terms of assembly, component of multiple DCX (DDB1-CUL4-X-box) E3 ubiquitin-protein ligase complexes that seem to be formed of DDB1, CUL4A or CUL4B, RBX1 and a variable substrate recognition component which seems to belong to a protein family described as DCAF (Ddb1- and Cul4-associated factor) or CDW (CUL4-DDB1-associated WD40-repeat) proteins. Component of the DCX(DTL) complex with the putative substrate recognition component DTL. Component of the DCX(DDB2) complex with the putative substrate recognition component DDB2. Component of DCX complexes part of the DesCEND (destruction via C-end degrons) pathway, which contain either TRPC4AP or DCAF12 as substrate-recognition component. Component of the DCX(AMBRA1) complex with the substrate recognition component AMBRA1. Part of a complex with RBX1 and TIP120A/CAND1. Component of the DCX(WDR77) complex, composed of Cul4b, Ddb1, Wdr77 and Rbx1. Interacts with RBX1, GRWD1, MLST8, SMU1, TLE2, TLE3, DCAF1, DDA1, DCAF6, DCAF17, DDB2, DCAF8, TIP120A/CAND1 and TMEM113. Interacts with cyclin E (CCNE1 or CCNE2) and with importins alpha-1 (KPNA2), alpha-3 (KPNA4), alpha-5 (KPNA1) and beta-1 (KPNB1). May interact with WDR26, WDR51B, SNRNP40, WDR61, WDR76 and WDR5. Interacts (unneddylated form) with DCUN1D1, DCUN1D2, DCUN1D3, DCUN1D4 and DCUN1D5; these interactions promote the cullin neddylation. Neddylated. Deneddylated via its interaction with the COP9 signalosome (CSN) complex. In terms of tissue distribution, expressed in oocytes (at protein level).

The protein resides in the cytoplasm. The protein localises to the nucleus. It participates in protein modification; protein ubiquitination. Functionally, core component of multiple cullin-RING-based E3 ubiquitin-protein ligase complexes which mediate the ubiquitination and subsequent proteasomal degradation of target proteins. The functional specificity of the E3 ubiquitin-protein ligase complex depends on the variable substrate recognition subunit. CUL4B may act within the complex as a scaffold protein, contributing to catalysis through positioning of the substrate and the ubiquitin-conjugating enzyme. Plays a role as part of the E3 ubiquitin-protein ligase complex in polyubiquitination of CDT1, histone H2A, histone H3 and histone H4 in response to radiation-induced DNA damage. Targeted to UV damaged chromatin by DDB2 and may be important for DNA repair and DNA replication. A number of DCX complexes (containing either TRPC4AP or DCAF12 as substrate-recognition component) are part of the DesCEND (destruction via C-end degrons) pathway, which recognizes a C-degron located at the extreme C terminus of target proteins, leading to their ubiquitination and degradation. The DCX(AMBRA1) complex is a master regulator of the transition from G1 to S cell phase by mediating ubiquitination of phosphorylated cyclin-D (CCND1, CCND2 and CCND3). The DCX(AMBRA1) complex also acts as a regulator of Cul5-RING (CRL5) E3 ubiquitin-protein ligase complexes by mediating ubiquitination and degradation of Elongin-C (ELOC) component of CRL5 complexes. Required for ubiquitination of cyclin E (CCNE1 or CCNE2), and consequently, normal G1 cell cycle progression. Component of the DCX(WDR77) complex, which mediates ubiquitination and degradation of Irgm1 in intestinal cells. Regulates the mammalian target-of-rapamycin (mTOR) pathway involved in control of cell growth, size and metabolism. Specific CUL4B regulation of the mTORC1-mediated pathway is dependent upon 26S proteasome function and requires interaction between CUL4B and MLST8. With CUL4A, contributes to ribosome biogenesis. The chain is Cullin-4B from Mus musculus (Mouse).